Consider the following 766-residue polypeptide: Protein zer-1 homolog (766 aa).

Residue A2 is modified to N-acetylalanine. LRR repeat units lie at residues 226-245, 246-268, and 278-302; these read SLVL…IVQL, HKLR…KLTR, and LGNL…KMEE. 5 ARM repeats span residues 427–467, 511–556, 558–600, 602–643, and 714–756; these read RSEQ…NFSI, DNDH…NITD, TPDN…NVAE, KELR…HIMF, and PDKY…HCSN.

It belongs to the zyg-11 family. In terms of assembly, interacts with the ELOC-ELOB/Elongin BC complex. Part of an E3 ubiquitin ligase complex including ZER1, CUL2 and Elongin BC. In terms of tissue distribution, expressed in testis, spermatocytes and spermatids (at protein level). Expressed in spermatocytes, spermatids, prostate, skeletal muscle, ovary, small intestine, heart, brain and pancreas.

Serves as substrate adapter subunit in the E3 ubiquitin ligase complex ZYG11B-CUL2-Elongin BC. Acts to target substrates bearing N-terminal degrons for proteasomal degradation with the first four residues of substrates being the key recognition elements. Involved in the clearance of proteolytic fragments generated by caspase cleavage during apoptosis since N-terminal glycine degrons are strongly enriched at caspase cleavage sites. Also important in the quality control of protein N-myristoylation in which N-terminal glycine degrons are conditionally exposed after a failure of N-myristoylation. In Homo sapiens (Human), this protein is Protein zer-1 homolog.